Here is a 269-residue protein sequence, read N- to C-terminus: AQSVPWGISRVQAPAAHNRGLTGSGVKVAVLDTGISTHPDLNIRGGASFVPGEPSTQDGNGHGTHVAGTIAALNNSIGVLGVAPSAELYAVKVLGASGSGSVSSIAQGLEWAGNNGMHVANLSLGSPSPSATLEQAVNSATSRGVLVVAASGNSGAGSISYPARYANAMAVGATDQNNNRASFSQYGAGLDIVAPGVNVQSTYPGSTYASLNGTSMATPHVAGAAALVKQKNPSWSNVQIRNHLKNTATSLGSTNLYGSGLVNAEAATR.

Position 2 (Q2) interacts with Ca(2+). Positions 5-268 (PWGISRVQAP…SGLVNAEAAT (264 aa)) constitute a Peptidase S8 domain. The active-site Charge relay system is D32. D40 provides a ligand contact to Ca(2+). H62 functions as the Charge relay system in the catalytic mechanism. Ca(2+) contacts are provided by L73, N75, I77, V79, A163, Y165, and A168. The Charge relay system role is filled by S215.

It belongs to the peptidase S8 family. The cofactor is Ca(2+).

The protein resides in the secreted. The enzyme catalyses Hydrolysis of proteins with broad specificity for peptide bonds, and a preference for a large uncharged residue in P1. Hydrolyzes peptide amides.. Its function is as follows. Subtilisin is an extracellular alkaline serine protease, it catalyzes the hydrolysis of proteins and peptide amides. The sequence is that of Subtilisin Savinase from Lederbergia lenta (Bacillus lentus).